Consider the following 240-residue polypeptide: Uridylate kinase (240 aa).

An ATP-binding site is contributed by 12–15; it reads KLSG. The interval 20–25 is involved in allosteric activation by GTP; the sequence is GKQGFG. Glycine 54 provides a ligand contact to UMP. Glycine 55 and arginine 59 together coordinate ATP. Residues aspartate 74 and 135-142 each bind UMP; that span reads TGNPYFST. The ATP site is built by asparagine 163, tyrosine 169, and aspartate 172.

Belongs to the UMP kinase family. Homohexamer.

It localises to the cytoplasm. It catalyses the reaction UMP + ATP = UDP + ADP. The protein operates within pyrimidine metabolism; CTP biosynthesis via de novo pathway; UDP from UMP (UMPK route): step 1/1. Its activity is regulated as follows. Allosterically activated by GTP. Inhibited by UTP. Functionally, catalyzes the reversible phosphorylation of UMP to UDP. The protein is Uridylate kinase of Geobacillus kaustophilus (strain HTA426).